The following is an 87-amino-acid chain: U3-theraphotoxin-Hhn1p (87 aa).

An N-terminal signal peptide occupies residues 1–24 (MVNMKASMFLTFAGLVLLFVVCYA). Positions 25–52 (SESEEKEFPKEMLSSIFAVDNDFKQEER) are excised as a propeptide. Intrachain disulfides connect Cys-54–Cys-67, Cys-61–Cys-72, and Cys-66–Cys-79.

The protein belongs to the neurotoxin 10 (Hwtx-1) family. 51 (Hntx-8) subfamily. Hntx-8 sub-subfamily. Expressed by the venom gland.

It is found in the secreted. Ion channel inhibitor. This chain is U3-theraphotoxin-Hhn1p, found in Cyriopagopus hainanus (Chinese bird spider).